Consider the following 215-residue polypeptide: Adenylate kinase (215 aa).

Residue 10–15 (GAGKGT) coordinates ATP. Residues 30 to 59 (STGDMFRAAIKEGTELGKQAKALMDQGKLV) form an NMP region. Residues Thr31, Arg36, 57 to 59 (KLV), 85 to 88 (GFPR), and Gln92 contribute to the AMP site. The interval 122–159 (GRRVHQPSGRTYHIIYNPPKVAGQDDITGEELITRADD) is LID. ATP contacts are provided by residues Arg123 and 132–133 (TY). Residues Arg156 and Arg167 each coordinate AMP. Residue Lys200 participates in ATP binding.

This sequence belongs to the adenylate kinase family. Monomer.

The protein localises to the cytoplasm. It catalyses the reaction AMP + ATP = 2 ADP. Its pathway is purine metabolism; AMP biosynthesis via salvage pathway; AMP from ADP: step 1/1. Functionally, catalyzes the reversible transfer of the terminal phosphate group between ATP and AMP. Plays an important role in cellular energy homeostasis and in adenine nucleotide metabolism. This is Adenylate kinase from Haemophilus ducreyi (strain 35000HP / ATCC 700724).